A 493-amino-acid chain; its full sequence is Cell division protein FtsA (493 aa).

The segment at 434-468 (AHQSNPTPHIHSSPTERNLSDLKTPSAPLNTAKND) is disordered. Residues 436–465 (QSNPTPHIHSSPTERNLSDLKTPSAPLNTA) show a composition bias toward polar residues.

The protein belongs to the FtsA/MreB family. In terms of assembly, self-interacts. Interacts with FtsZ.

It is found in the cell inner membrane. Its function is as follows. Cell division protein that is involved in the assembly of the Z ring. May serve as a membrane anchor for the Z ring. In Helicobacter pylori (strain J99 / ATCC 700824) (Campylobacter pylori J99), this protein is Cell division protein FtsA.